Reading from the N-terminus, the 121-residue chain is Large ribosomal subunit protein uL22 (121 aa).

This sequence belongs to the universal ribosomal protein uL22 family. Part of the 50S ribosomal subunit.

In terms of biological role, this protein binds specifically to 23S rRNA; its binding is stimulated by other ribosomal proteins, e.g. L4, L17, and L20. It is important during the early stages of 50S assembly. It makes multiple contacts with different domains of the 23S rRNA in the assembled 50S subunit and ribosome. Its function is as follows. The globular domain of the protein is located near the polypeptide exit tunnel on the outside of the subunit, while an extended beta-hairpin is found that lines the wall of the exit tunnel in the center of the 70S ribosome. The sequence is that of Large ribosomal subunit protein uL22 from Rickettsia massiliae (strain Mtu5).